Consider the following 147-residue polypeptide: Large ribosomal subunit protein uL15 (147 aa).

Residues 1–28 (MIRRRKKVRKLRGSHTHGWGCKKKHRGG) show a composition bias toward basic residues. The disordered stretch occupies residues 1 to 43 (MIRRRKKVRKLRGSHTHGWGCKKKHRGGGSKGGRGMAGTGKRN). Residues 29-38 (GSKGGRGMAG) show a composition bias toward gly residues.

It belongs to the universal ribosomal protein uL15 family. As to quaternary structure, part of the 50S ribosomal subunit.

Functionally, binds to the 23S rRNA. The chain is Large ribosomal subunit protein uL15 from Pyrococcus abyssi (strain GE5 / Orsay).